A 706-amino-acid polypeptide reads, in one-letter code: Integrator complex subunit 13 (706 aa).

The segment at proline 564–leucine 603 is disordered. Residues glutamate 567 to aspartate 622 are a coiled coil. A Nuclear localization signal (NLS) motif is present at residues lysine 572–aspartate 582. Lysine 611 participates in a covalent cross-link: Glycyl lysine isopeptide (Lys-Gly) (interchain with G-Cter in SUMO2). Positions alanine 615–valine 636 are enriched in basic and acidic residues. Residues alanine 615 to proline 650 are disordered. Residues serine 623, serine 626, and serine 678 each carry the phosphoserine modification. Residues glycine 649 to glycine 694 are cleavage module binding motif (CMBM).

This sequence belongs to the Integrator subunit 13 family. In terms of assembly, component of the Integrator complex, composed of core subunits INTS1, INTS2, INTS3, INTS4, INTS5, INTS6, INTS7, INTS8, INTS9/RC74, INTS10, INTS11/CPSF3L, INTS12, INTS13, INTS14 and INTS15. The core complex associates with protein phosphatase 2A subunits PPP2CA and PPP2R1A, to form the Integrator-PP2A (INTAC) complex. INTS13 is part of the tail subcomplex, composed of INTS10, INTS13, INTS14 and INTS15. Interacts with transcription factors ZNF609 and ZNF655. Interacts with PAFAH1B1; this interaction may be required for proper recruitment of dynein complexes to the nuclear envelope at prophase. Widely expressed. Tends to be up-regulated in seminomas compared to normal testis.

It localises to the nucleus. The protein localises to the cytoplasm. Functionally, component of the integrator complex, a multiprotein complex that terminates RNA polymerase II (Pol II) transcription in the promoter-proximal region of genes. The integrator complex provides a quality checkpoint during transcription elongation by driving premature transcription termination of transcripts that are unfavorably configured for transcriptional elongation: the complex terminates transcription by (1) catalyzing dephosphorylation of the C-terminal domain (CTD) of Pol II subunit POLR2A/RPB1 and SUPT5H/SPT5, (2) degrading the exiting nascent RNA transcript via endonuclease activity and (3) promoting the release of Pol II from bound DNA. The integrator complex is also involved in terminating the synthesis of non-coding Pol II transcripts, such as enhancer RNAs (eRNAs), small nuclear RNAs (snRNAs), telomerase RNAs and long non-coding RNAs (lncRNAs). Within the integrator complex, INTS13 is part of the integrator tail module and acts as a platform for the recruitment of transcription factors at promoters. At prophase, mediates recruitment of cytoplasmic dynein to the nuclear envelope, a step important for proper centrosome-nucleus coupling. At G2/M phase, may be required for proper spindle formation and execution of cytokinesis. In Homo sapiens (Human), this protein is Integrator complex subunit 13.